The sequence spans 202 residues: Large ribosomal subunit protein bL9 (202 aa).

A disordered region spans residues 177–202 (AGEFFDPEAEPDDVAEAGGEQTAEEK). The segment covering 181–191 (FDPEAEPDDVA) has biased composition (acidic residues).

This sequence belongs to the bacterial ribosomal protein bL9 family.

Functionally, binds to the 23S rRNA. The polypeptide is Large ribosomal subunit protein bL9 (Nitrobacter hamburgensis (strain DSM 10229 / NCIMB 13809 / X14)).